The primary structure comprises 360 residues: DNA polymerase IV (360 aa).

Residues 8–191 form the UmuC domain; that stretch reads VLHVDMDSFF…LPVGRIPGIG (184 aa). The Mg(2+) site is built by Asp12 and Asp110. The active site involves Glu111.

The protein belongs to the DNA polymerase type-Y family. Monomer. It depends on Mg(2+) as a cofactor.

The protein localises to the cytoplasm. The enzyme catalyses DNA(n) + a 2'-deoxyribonucleoside 5'-triphosphate = DNA(n+1) + diphosphate. Its function is as follows. Poorly processive, error-prone DNA polymerase involved in untargeted mutagenesis. Copies undamaged DNA at stalled replication forks, which arise in vivo from mismatched or misaligned primer ends. These misaligned primers can be extended by PolIV. Exhibits no 3'-5' exonuclease (proofreading) activity. May be involved in translesional synthesis. This chain is DNA polymerase IV, found in Methanoculleus marisnigri (strain ATCC 35101 / DSM 1498 / JR1).